The sequence spans 281 residues: Phosphonates import ATP-binding protein PhnC 2 (281 aa).

The region spanning 4–238 is the ABC transporter domain; the sequence is LTVDNVTKTY…LVDDLYGNVE (235 aa). 35–42 is an ATP binding site; sequence GESGAGKS. The tract at residues 243–281 is disordered; sequence ATDNSDNSTVDTSDGTRYDTETGSDGTDEVDVIGRQVES. The segment covering 244 to 255 has biased composition (low complexity); sequence TDNSDNSTVDTS.

The protein belongs to the ABC transporter superfamily. Phosphonates importer (TC 3.A.1.9.1) family. The complex is composed of two ATP-binding proteins (PhnC), two transmembrane proteins (PhnE) and a solute-binding protein (PhnD).

The protein localises to the cell membrane. The catalysed reaction is phosphonate(out) + ATP + H2O = phosphonate(in) + ADP + phosphate + H(+). Functionally, part of the ABC transporter complex PhnCDE involved in phosphonates import. Responsible for energy coupling to the transport system. This chain is Phosphonates import ATP-binding protein PhnC 2, found in Haloquadratum walsbyi (strain DSM 16790 / HBSQ001).